We begin with the raw amino-acid sequence, 204 residues long: Large ribosomal subunit protein eL15 (204 aa).

Disordered regions lie at residues 71–91 and 159–182; these read RKRP…GVNQ and REMR…HYSQ. Basic residues predominate over residues 159–174; that stretch reads REMRGKTSAGRKHRGL.

This sequence belongs to the eukaryotic ribosomal protein eL15 family.

This chain is Large ribosomal subunit protein eL15 (RPL15), found in Faxonius limosus (Spinycheek crayfish).